The primary structure comprises 341 residues: MLRLIDSISDNCTVKTALYGALLLGVYKLTTFALSLVSLVLDLWVLPPVNFAKYGAKKGKWAVITGASDGIGKEYATQLAAKGLNVVLVSRTESKLVALAEEIESKYKVSTKVLAFDVSLDAESSYEDLAATIADLPVTVLVNNVGQSHSIPVPFLETDEKELRNIITINNTATLKITQVVAPKIVHTVASEKKKTRGLILTMGSFGGLLPTPYLATYSGSKAFLQSWSNALSGELQPQGVDVELVISYLVTSAMSKIRRSSASIPNPKAFVKSVLRNVGRRVGAQERFGTTTPYWAHAFMHFGIVNSVGVYSKIANSLNLGMHKSIRSRALKKAARQKKD.

Residues 17–37 (ALYGALLLGVYKLTTFALSLV) form a helical membrane-spanning segment. Residues Val63, Asp117, Asn144, Tyr218, Lys222, Val251, and Ser253 each contribute to the NADP(+) site. Tyr218 functions as the Proton donor in the catalytic mechanism. Lys222 acts as the Lowers pKa of active site Tyr in catalysis.

Belongs to the short-chain dehydrogenases/reductases (SDR) family.

It is found in the endoplasmic reticulum membrane. The catalysed reaction is a very-long-chain (3R)-3-hydroxyacyl-CoA + NADP(+) = a very-long-chain 3-oxoacyl-CoA + NADPH + H(+). The protein operates within lipid metabolism; fatty acid biosynthesis. Functionally, component of the microsomal membrane bound fatty acid elongation system, which produces the 26-carbon very long-chain fatty acids (VLCFA) from palmitate. Catalyzes the reduction of the 3-ketoacyl-CoA intermediate that is formed in each cycle of fatty acid elongation. VLCFAs serve as precursors for ceramide and sphingolipids. In Meyerozyma guilliermondii (strain ATCC 6260 / CBS 566 / DSM 6381 / JCM 1539 / NBRC 10279 / NRRL Y-324) (Yeast), this protein is Very-long-chain 3-oxoacyl-CoA reductase.